Here is a 519-residue protein sequence, read N- to C-terminus: Protein nucleotidyltransferase YdiU (519 aa).

Residues Gly-100, Gly-102, Arg-103, Lys-123, Asp-135, Gly-136, Arg-193, and Arg-200 each coordinate ATP. Asp-270 (proton acceptor) is an active-site residue. Positions 271 and 280 each coordinate Mg(2+). Asp-280 is a binding site for ATP.

Belongs to the SELO family. It depends on Mg(2+) as a cofactor. Mn(2+) serves as cofactor.

It carries out the reaction L-seryl-[protein] + ATP = 3-O-(5'-adenylyl)-L-seryl-[protein] + diphosphate. The catalysed reaction is L-threonyl-[protein] + ATP = 3-O-(5'-adenylyl)-L-threonyl-[protein] + diphosphate. The enzyme catalyses L-tyrosyl-[protein] + ATP = O-(5'-adenylyl)-L-tyrosyl-[protein] + diphosphate. It catalyses the reaction L-histidyl-[protein] + UTP = N(tele)-(5'-uridylyl)-L-histidyl-[protein] + diphosphate. It carries out the reaction L-seryl-[protein] + UTP = O-(5'-uridylyl)-L-seryl-[protein] + diphosphate. The catalysed reaction is L-tyrosyl-[protein] + UTP = O-(5'-uridylyl)-L-tyrosyl-[protein] + diphosphate. Functionally, nucleotidyltransferase involved in the post-translational modification of proteins. It can catalyze the addition of adenosine monophosphate (AMP) or uridine monophosphate (UMP) to a protein, resulting in modifications known as AMPylation and UMPylation. This chain is Protein nucleotidyltransferase YdiU, found in Xylella fastidiosa (strain 9a5c).